The following is a 348-amino-acid chain: RNA 3'-terminal phosphate cyclase (348 aa).

ATP-binding positions include Gln102 and 285 to 288 (HMGD). The active-site Tele-AMP-histidine intermediate is the His311.

This sequence belongs to the RNA 3'-terminal cyclase family. Type 1 subfamily.

It localises to the cytoplasm. It catalyses the reaction a 3'-end 3'-phospho-ribonucleotide-RNA + ATP = a 3'-end 2',3'-cyclophospho-ribonucleotide-RNA + AMP + diphosphate. Its function is as follows. Catalyzes the conversion of 3'-phosphate to a 2',3'-cyclic phosphodiester at the end of RNA. The mechanism of action of the enzyme occurs in 3 steps: (A) adenylation of the enzyme by ATP; (B) transfer of adenylate to an RNA-N3'P to produce RNA-N3'PP5'A; (C) and attack of the adjacent 2'-hydroxyl on the 3'-phosphorus in the diester linkage to produce the cyclic end product. The biological role of this enzyme is unknown but it is likely to function in some aspects of cellular RNA processing. This Korarchaeum cryptofilum (strain OPF8) protein is RNA 3'-terminal phosphate cyclase.